A 175-amino-acid chain; its full sequence is LCLNATVRNATKVKDGFQLTEPDSGVMWPVNIPDYNKRHVFLNHNFTLVASVTIEEAPSGNTPLLIAVLANTEPTHTMRILYTADNKWMTMLKDEKKPTTESGTWEPKKEHQVALMLQGNKASVYVDGELLGEEEVPLTGEKPLELFAFCFGACGEENPSQESHVTVTNVFLYNR.

It belongs to the glycosyl hydrolase 33 family.

It catalyses the reaction Hydrolysis of alpha-(2-&gt;3)-, alpha-(2-&gt;6)-, alpha-(2-&gt;8)- glycosidic linkages of terminal sialic acid residues in oligosaccharides, glycoproteins, glycolipids, colominic acid and synthetic substrates.. Its function is as follows. Developmentally regulated neuraminidase implicated in parasite invasion of cells. May contribute to the pathology during T.cruzi infection by cleaving sialic acid from cells of the immune system. The protein is Sialidase 85-1.3 (SA85-1.3) of Trypanosoma cruzi.